The sequence spans 230 residues: MARAAVRAGAKVALIDRDGACAEKAAAEIGAAAWGVGADVTDEAAIAAAMAGAERALGPLTGLVNNAGIAGFGSVHTTEVETWGRIMAVNVTGTFLASKAALSGMLERRRGAIVNFGSVAGLVGIPSMAAYCAAKGAVVSLTRQMAAEYSGQGIRVNVVCPGTVASTDMGRQLLGQDADPELEARRLAKYPIGRFGTPEDIAEAAIFLLSTKAAFVTGCVFAVDGGMTAI.

Belongs to the short-chain dehydrogenases/reductases (SDR) family.

The protein is Inactive 2-(S)-hydroxypropyl-CoM dehydrogenase 2 of Xanthobacter autotrophicus (strain ATCC BAA-1158 / Py2).